The chain runs to 364 residues: Probable dual-specificity RNA methyltransferase RlmN (364 aa).

The active-site Proton acceptor is Glu107. The Radical SAM core domain occupies 113 to 346; the sequence is HEYGNSVCVT…ATIRREQGSD (234 aa). Cys120 and Cys351 are joined by a disulfide. Cys127, Cys131, and Cys134 together coordinate [4Fe-4S] cluster. S-adenosyl-L-methionine contacts are provided by residues 177 to 178, Ser209, 232 to 234, and Asn308; these read GE and SLH. The S-methylcysteine intermediate role is filled by Cys351.

Belongs to the radical SAM superfamily. RlmN family. Requires [4Fe-4S] cluster as cofactor.

The protein resides in the cytoplasm. It carries out the reaction adenosine(2503) in 23S rRNA + 2 reduced [2Fe-2S]-[ferredoxin] + 2 S-adenosyl-L-methionine = 2-methyladenosine(2503) in 23S rRNA + 5'-deoxyadenosine + L-methionine + 2 oxidized [2Fe-2S]-[ferredoxin] + S-adenosyl-L-homocysteine. The enzyme catalyses adenosine(37) in tRNA + 2 reduced [2Fe-2S]-[ferredoxin] + 2 S-adenosyl-L-methionine = 2-methyladenosine(37) in tRNA + 5'-deoxyadenosine + L-methionine + 2 oxidized [2Fe-2S]-[ferredoxin] + S-adenosyl-L-homocysteine. Its function is as follows. Specifically methylates position 2 of adenine 2503 in 23S rRNA and position 2 of adenine 37 in tRNAs. Confers resistance to some classes of antibiotics. In Staphylococcus epidermidis (strain ATCC 12228 / FDA PCI 1200), this protein is Probable dual-specificity RNA methyltransferase RlmN.